Consider the following 471-residue polypeptide: ATP synthase subunit beta (471 aa).

Position 154 to 161 (154 to 161) interacts with ATP; the sequence is GGAGVGKT.

This sequence belongs to the ATPase alpha/beta chains family. In terms of assembly, F-type ATPases have 2 components, CF(1) - the catalytic core - and CF(0) - the membrane proton channel. CF(1) has five subunits: alpha(3), beta(3), gamma(1), delta(1), epsilon(1). CF(0) has three main subunits: a(1), b(2) and c(9-12). The alpha and beta chains form an alternating ring which encloses part of the gamma chain. CF(1) is attached to CF(0) by a central stalk formed by the gamma and epsilon chains, while a peripheral stalk is formed by the delta and b chains.

The protein resides in the cell membrane. It catalyses the reaction ATP + H2O + 4 H(+)(in) = ADP + phosphate + 5 H(+)(out). Produces ATP from ADP in the presence of a proton gradient across the membrane. The catalytic sites are hosted primarily by the beta subunits. The protein is ATP synthase subunit beta of Mesomycoplasma hyopneumoniae (strain 7448) (Mycoplasma hyopneumoniae).